Here is a 655-residue protein sequence, read N- to C-terminus: Fidgetin-like protein 1 (655 aa).

The segment at 289-313 (QQKKHSNQPQRNPGPLYGGGKKSLG) is disordered. Residues Ala-385 and 425-430 (GTGKTL) contribute to the ATP site.

Belongs to the AAA ATPase family. As to quaternary structure, hexamer. The cofactor is Mg(2+).

It is found in the nucleus. The protein localises to the cytoplasm. Its subcellular location is the perinuclear region. It catalyses the reaction ATP + H2O = ADP + phosphate + H(+). Its function is as follows. May be involved in DNA double-strand break (DBS) repair via homologous recombination (HR). May regulate osteoblast proliferation and differentiation. The chain is Fidgetin-like protein 1 (fignl1) from Xenopus laevis (African clawed frog).